The sequence spans 2103 residues: Zinc finger SWIM domain-containing protein 8 homolog (2103 aa).

The segment at 191 to 227 adopts an SWIM-type zinc-finger fold; sequence FNVAVTFDRRRISSCNCTCTSSAYWCSHVVAVCLHRI. Disordered stretches follow at residues 684–860, 1237–1262, 1310–1399, 1735–1772, 1786–1864, and 1888–1916; these read DGNR…GSTA, SSNP…GGSG, SSGS…IPNQ, MQMF…QVVQ, QQVQ…GVGV, and PFMQ…RQPH. A compositionally biased stretch (polar residues) spans 724–740; the sequence is SALTESDSQSSFDAVSH. Composition is skewed to low complexity over residues 754–789 and 835–857; these read AVGV…STSS and GRVA…VGSG. A compositionally biased stretch (polar residues) spans 1237–1249; it reads SSNPPVRTRSNQP. A compositionally biased stretch (low complexity) spans 1320 to 1351; the sequence is GMVPTTNAAGTTGTPSSSSTTVSGSQNPNGNP. The span at 1352-1377 shows a compositional bias: gly residues; sequence SGSGGGGNGGGGNGGGGGGGGGGGGS. Pro residues predominate over residues 1755-1764; sequence QPPPQQPPNP. Composition is skewed to low complexity over residues 1786 to 1813 and 1820 to 1835; these read QQVQ…SGFQ and AFQA…MQAG. Composition is skewed to pro residues over residues 1836–1859 and 1894–1908; these read PPGP…PNGP and PPQP…PSQP.

This sequence belongs to the ZSWIM8 family. As to quaternary structure, component of the SCF-like E3 ubiquitin-protein ligase complex.

It functions in the pathway protein modification; protein ubiquitination. Substrate recognition component of a SCF-like E3 ubiquitin-protein ligase complex that promotes target-directed microRNA degradation (TDMD), a process that mediates degradation of microRNAs (miRNAs). The SCF-like E3 ubiquitin-protein ligase complex acts by catalyzing ubiquitination and subsequent degradation of AGO1, thereby exposing miRNAs for degradation. The protein is Zinc finger SWIM domain-containing protein 8 homolog of Drosophila melanogaster (Fruit fly).